The chain runs to 231 residues: Ribosomal RNA small subunit methyltransferase nep-1 (231 aa).

Residues methionine 161, glycine 188, glycine 193, and 206-211 (ISNYPL) each bind S-adenosyl-L-methionine.

This sequence belongs to the class IV-like SAM-binding methyltransferase superfamily. RNA methyltransferase NEP1 family. Homodimer.

It localises to the nucleus. Its subcellular location is the nucleolus. The enzyme catalyses a pseudouridine in rRNA + S-adenosyl-L-methionine = an N(1)-methylpseudouridine in rRNA + S-adenosyl-L-homocysteine + H(+). Its function is as follows. S-adenosyl-L-methionine-dependent pseudouridine N(1)-methyltransferase that methylates a pseudouridine in 18S rRNA. Involved the biosynthesis of the hypermodified N1-methyl-N3-(3-amino-3-carboxypropyl) pseudouridine (m1acp3-Psi) conserved in eukaryotic 18S rRNA. Also has an essential role in 40S ribosomal subunit biogenesis independent on its methyltransferase activity, facilitating the incorporation of ribosomal protein S19 during the formation of pre-ribosomes. The protein is Ribosomal RNA small subunit methyltransferase nep-1 of Caenorhabditis elegans.